The chain runs to 248 residues: uncharacterized protein (248 aa).

This is an uncharacterized protein from Escherichia coli (Bacteriophage T4).